The following is a 320-amino-acid chain: Malate dehydrogenase (320 aa).

Residues 10–15 and Asp-34 contribute to the NAD(+) site; that span reads GSGMIG. Substrate-binding residues include Arg-83 and Arg-89. NAD(+) is bound by residues Asn-96 and 119–121; that span reads ITN. 2 residues coordinate substrate: Asn-121 and Arg-152. His-176 acts as the Proton acceptor in catalysis.

It belongs to the LDH/MDH superfamily. MDH type 3 family.

It carries out the reaction (S)-malate + NAD(+) = oxaloacetate + NADH + H(+). Functionally, catalyzes the reversible oxidation of malate to oxaloacetate. This Bartonella tribocorum (strain CIP 105476 / IBS 506) protein is Malate dehydrogenase.